We begin with the raw amino-acid sequence, 73 residues long: U-scoloptoxin(22)-Cw1a (73 aa).

The N-terminal stretch at 1-24 (MRRFVFLAFVLVLFVIANLDSSSA) is a signal peptide.

Belongs to the scoloptoxin-22 family. In terms of processing, contains 1 disulfide bond. In terms of tissue distribution, expressed by the venom gland.

It localises to the secreted. This is U-scoloptoxin(22)-Cw1a from Cormocephalus westwoodi (Westwood's green centipede).